We begin with the raw amino-acid sequence, 437 residues long: Protein disulfide-isomerase tmx3a (437 aa).

The signal sequence occupies residues 1-21 (MANMRNIILTALLSAIALVSG). Residues 22-126 (YVEGLDDKFT…IIEFTNRVSG (105 aa)) enclose the Thioredoxin domain. Residues 22–368 (YVEGLDDKFT…KNTVMSMVET (347 aa)) are Extracellular-facing. Active-site nucleophile residues include C48 and C51. A disulfide bridge links C48 with C51. N-linked (GlcNAc...) asparagine glycosylation occurs at N308. The chain crosses the membrane as a helical span at residues 369-389 (APVFSCFVLGLPVGVVVLVIY). Over 390-437 (ATCTAVPADDEKPEEEATASPALDTHGKKAIESQPESTEKTSEAKKED) the chain is Cytoplasmic. The tract at residues 398 to 437 (DDEKPEEEATASPALDTHGKKAIESQPESTEKTSEAKKED) is disordered. The segment covering 414–437 (THGKKAIESQPESTEKTSEAKKED) has biased composition (basic and acidic residues). The short motif at 434–437 (KKED) is the Di-lysine motif element.

Its subcellular location is the endoplasmic reticulum membrane. The enzyme catalyses Catalyzes the rearrangement of -S-S- bonds in proteins.. Probable disulfide isomerase, which participates in the folding of proteins containing disulfide bonds. May act as a dithiol oxidase. Acts as a regulator of endoplasmic reticulum-mitochondria contact sites via its ability to regulate redox signals. In Danio rerio (Zebrafish), this protein is Protein disulfide-isomerase tmx3a (tmx3a).